A 625-amino-acid polypeptide reads, in one-letter code: Chaperone protein HtpG (625 aa).

Residues 1–337 (MNIQKKEVYS…SNNLPLNVSR (337 aa)) form an a; substrate-binding region. Residues 338-552 (EILQDNSITQ…SNEMSTQMAK (215 aa)) form a b region. Positions 553-625 (LFSAAGQSVP…ARTNKLILEQ (73 aa)) are c.

The protein belongs to the heat shock protein 90 family. Homodimer.

The protein localises to the cytoplasm. Molecular chaperone. Has ATPase activity. This is Chaperone protein HtpG from Buchnera aphidicola subsp. Schizaphis graminum (strain Sg).